A 290-amino-acid polypeptide reads, in one-letter code: Putative phosphoenolpyruvate synthase regulatory protein (290 aa).

170–177 (GVSRCGKT) provides a ligand contact to ADP.

This sequence belongs to the pyruvate, phosphate/water dikinase regulatory protein family. PSRP subfamily.

It carries out the reaction [pyruvate, water dikinase] + ADP = [pyruvate, water dikinase]-phosphate + AMP + H(+). It catalyses the reaction [pyruvate, water dikinase]-phosphate + phosphate + H(+) = [pyruvate, water dikinase] + diphosphate. Its function is as follows. Bifunctional serine/threonine kinase and phosphorylase involved in the regulation of the phosphoenolpyruvate synthase (PEPS) by catalyzing its phosphorylation/dephosphorylation. In Enterobacter agglomerans (Erwinia herbicola), this protein is Putative phosphoenolpyruvate synthase regulatory protein (ydiA).